The primary structure comprises 280 residues: Putative pyruvate, phosphate dikinase regulatory protein (280 aa).

158–165 (GVSRTSKT) contacts ADP.

This sequence belongs to the pyruvate, phosphate/water dikinase regulatory protein family. PDRP subfamily.

The enzyme catalyses N(tele)-phospho-L-histidyl/L-threonyl-[pyruvate, phosphate dikinase] + ADP = N(tele)-phospho-L-histidyl/O-phospho-L-threonyl-[pyruvate, phosphate dikinase] + AMP + H(+). It carries out the reaction N(tele)-phospho-L-histidyl/O-phospho-L-threonyl-[pyruvate, phosphate dikinase] + phosphate + H(+) = N(tele)-phospho-L-histidyl/L-threonyl-[pyruvate, phosphate dikinase] + diphosphate. Functionally, bifunctional serine/threonine kinase and phosphorylase involved in the regulation of the pyruvate, phosphate dikinase (PPDK) by catalyzing its phosphorylation/dephosphorylation. In Lactobacillus johnsonii (strain CNCM I-12250 / La1 / NCC 533), this protein is Putative pyruvate, phosphate dikinase regulatory protein.